A 63-amino-acid polypeptide reads, in one-letter code: Large ribosomal subunit protein uL29 (63 aa).

Belongs to the universal ribosomal protein uL29 family.

The protein is Large ribosomal subunit protein uL29 of Alcanivorax borkumensis (strain ATCC 700651 / DSM 11573 / NCIMB 13689 / SK2).